Consider the following 1036-residue polypeptide: MVTTEVRTAVSDKEPLQRSPELDSSTDFLDNDRLKETFSSGALDFDEWTLLISEIETTSFPDDIEKLCLVYDAFLLEFPLCHGYWRKYAYHKIKLCTLEDAVEVFERAVQAATYSVAVWLDYCAFAVAAYEDPHDVSRLFERGLSFIGKDYSCCTLWDKYIEYLLGQQQWSSLANVYLRTLKYPSKKLDLYYKNFRKIAASLKEKIKCRIDVNGDLSSDPMEEDLVHTRHTDEEISIVVRELMGPSSSSAVSKALHTYLSIGEQFYQDSRQLMEKISCFETQIRRPYFHVKPLDTNQLDNWHAYLSFGETYGDFDWAINLYERCLIPCANYTEFWFRYVDFVESKGGRELANFALARASQTFVKSASVIHLFNARFKEHVGDASAASVALSRCGEELGFGFVENVTKKANMEKRLGNFEAAVTTYREALNKTLIGKENLETTARLYVQFSRLKYVITNSADDAAQILLEGNENVPHCKLLLEELMRLLMMHGGSRQVDLLDPIIDKELSHQADSSDGLSAEDKEEISNLYMEFIDLSGTIHDVRKALGRHIKLFPHSARAKLRGSRPSGNLFRELIQRREKTRERLNQDLLTNKGISSIVDSPPKEKKESSLDSYGTQSKDAVRADYVNTEPNQGCLTSGHLVEGNDNVIERETLCESQSDLSMGLKANEGGKRSHEVSLPIQASPEHGFVTKQAHFSSNSVDTVKSDAIVIQPSGSQSPQSYQSQESLRQTGRNRYHRRDLNQMHRDSKPRSQERPPQMPYSPVGTGREILGQHMAFTHQDNRVALQSSTSQNPQNQFQNSALQMHPVVQTSNAYPQSQIHGQHMIVSPPESQNPQNQCQNSTSQVQTSFAYPQTQIPQNPVQSNYQQEGQMQSHEAYNQMWQQYYYSYYYYQQQQQLMSEQPQPNQNPQPQLDQNLVQLLSKQYQSQAKTQYLQPQQVEQVNTQQQSQEPQNQQQIQFQQQQQQQEWFQQQQQWQQQQYLLYIQQQQLQGEAKGDEQRLSMPQGSTTNSDIQKSQESGAVNEANLSSDTSISSI.

A disordered region spans residues 1–24; the sequence is MVTTEVRTAVSDKEPLQRSPELDS. HAT repeat units follow at residues 62 to 94, 96 to 128, 131 to 166, 168 to 201, 278 to 310, and 312 to 344; these read DDIEKLCLVYDAFLLEFPLCHGYWRKYAYHKIK, CTLEDAVEVFERAVQAATYSVAVWLDYCAFAVA, EDPHDVSRLFERGLSFIGKDYSCCTLWDKYIEYLLG, QQWSSLANVYLRTLKYPSKKLDLYYKNFRKIAAS, CFETQIRRPYFHVKPLDTNQLDNWHAYLSFGET, and GDFDWAINLYERCLIPCANYTEFWFRYVDFVES. Disordered regions lie at residues 595–618, 714–767, and 995–1036; these read GISSIVDSPPKEKKESSLDSYGTQ, PSGS…PVGT, and KGDE…ISSI. Residues 714-726 are compositionally biased toward low complexity; the sequence is PSGSQSPQSYQSQ. A compositionally biased stretch (basic and acidic residues) spans 740-755; sequence RDLNQMHRDSKPRSQE. Positions 1002 to 1036 are enriched in polar residues; that stretch reads SMPQGSTTNSDIQKSQESGAVNEANLSSDTSISSI.

This sequence belongs to the PRP39 family.

The protein resides in the nucleus. In terms of biological role, involved in pre-mRNA splicing. This chain is Pre-mRNA-processing factor 39-2, found in Arabidopsis thaliana (Mouse-ear cress).